Reading from the N-terminus, the 366-residue chain is MNIRMVLLASAAAFAASTPVLAADAIVAAEPEPVEYVRVCDAYGTGYFYIPGTETCLKIEGYIRFQVNVGDNPGGDNDSDWDAVTAVRFSSRKSDTEYGPLTGVIVMQFNADNASDQDAILDSAYLDVAGFRAGLFYSWWDDGLSGETDDIGSVVTLHNSIRYQYESGTFYAGLSVDELEDGVYQGTFTPGVIPGTTDFTADDGPNNVGVAFGIGGTAGAFSYQVTGGWDVDNEDGAIRAMGTVEIGPGTFGLAGVYSSGPNSYYSSAEWAVAAEYAIKATDKLKITPGRWHGHVPEDFDGLGDAWKVGLTVDYQIVENFYAKASVQYLDPQDGEDSTSGYFACSVRSNHLVDAPGLRIGSTTISF.

Residues 1–22 (MNIRMVLLASAAAFAASTPVLA) form the signal peptide.

It belongs to the alphaproteobacteria porin family. In terms of assembly, forms calcium-stabilized oligomers. Attached covalently to peptidoglycan.

The protein resides in the cell outer membrane. Functionally, may act as an outer membrane pore. The protein is Outer membrane protein IIIA (ropA) of Rhizobium leguminosarum bv. viciae.